The sequence spans 122 residues: MIQTETMLDVADNSGARRVQCIKVLGGSHRRYASVGDIIKVTVKEAIPRARVKKGDVMNAVVVRTKFGIRRPDGSVIRFDDNAAVILNNNKAPIATRIFGPVTRELRTEQFMKIISLAPEVL.

This sequence belongs to the universal ribosomal protein uL14 family. In terms of assembly, part of the 50S ribosomal subunit. Forms a cluster with proteins L3 and L19. In the 70S ribosome, L14 and L19 interact and together make contacts with the 16S rRNA in bridges B5 and B8.

Binds to 23S rRNA. Forms part of two intersubunit bridges in the 70S ribosome. This Acinetobacter baumannii (strain AB307-0294) protein is Large ribosomal subunit protein uL14.